A 213-amino-acid polypeptide reads, in one-letter code: Large ribosomal subunit protein bL25 (213 aa).

A compositionally biased stretch (low complexity) spans 191–207; the sequence is AEPTDAPTAPAAAPGAE. The disordered stretch occupies residues 191 to 213; it reads AEPTDAPTAPAAAPGAEAPKDKA.

This sequence belongs to the bacterial ribosomal protein bL25 family. CTC subfamily. Part of the 50S ribosomal subunit; part of the 5S rRNA/L5/L18/L25 subcomplex. Contacts the 5S rRNA. Binds to the 5S rRNA independently of L5 and L18.

Its function is as follows. This is one of the proteins that binds to the 5S RNA in the ribosome where it forms part of the central protuberance. The chain is Large ribosomal subunit protein bL25 from Polynucleobacter asymbioticus (strain DSM 18221 / CIP 109841 / QLW-P1DMWA-1) (Polynucleobacter necessarius subsp. asymbioticus).